Consider the following 375-residue polypeptide: Methylthioribose-1-phosphate isomerase (375 aa).

The active-site Proton donor is the Asp257.

It belongs to the eIF-2B alpha/beta/delta subunits family. MtnA subfamily.

The protein localises to the cytoplasm. Its subcellular location is the nucleus. It carries out the reaction 5-(methylsulfanyl)-alpha-D-ribose 1-phosphate = 5-(methylsulfanyl)-D-ribulose 1-phosphate. Its pathway is amino-acid biosynthesis; L-methionine biosynthesis via salvage pathway; L-methionine from S-methyl-5-thio-alpha-D-ribose 1-phosphate: step 1/6. In terms of biological role, catalyzes the interconversion of methylthioribose-1-phosphate (MTR-1-P) into methylthioribulose-1-phosphate (MTRu-1-P). The sequence is that of Methylthioribose-1-phosphate isomerase from Leishmania major.